A 298-amino-acid chain; its full sequence is 33 kDa chaperonin (298 aa).

Intrachain disulfides connect C237/C239 and C270/C273.

Belongs to the HSP33 family. Under oxidizing conditions two disulfide bonds are formed involving the reactive cysteines. Under reducing conditions zinc is bound to the reactive cysteines and the protein is inactive.

It localises to the cytoplasm. Its function is as follows. Redox regulated molecular chaperone. Protects both thermally unfolding and oxidatively damaged proteins from irreversible aggregation. Plays an important role in the bacterial defense system toward oxidative stress. In Enterococcus faecalis (strain ATCC 700802 / V583), this protein is 33 kDa chaperonin.